A 567-amino-acid chain; its full sequence is Lactase-like protein (567 aa).

A signal peptide spans 1–21 (MKPVWVATLLWMLLLVPRLGA). At 23 to 541 (RKGSPEEASF…LLSHMQMVTE (519 aa)) the chain is on the extracellular side. N-linked (GlcNAc...) asparagine glycans are attached at residues N80, N171, and N245. Residues 542 to 562 (IVVPTVCSLCVLITAVLLMLL) traverse the membrane as a helical segment. At 563–567 (LRRQS) the chain is on the cytoplasmic side.

This sequence belongs to the glycosyl hydrolase 1 family. Klotho subfamily. As to quaternary structure, may form dimers.

The protein resides in the endoplasmic reticulum membrane. In terms of biological role, plays a role in formation of the lens suture in the eye, which is important for normal optical properties of the lens. The sequence is that of Lactase-like protein (LCTL) from Homo sapiens (Human).